Reading from the N-terminus, the 142-residue chain is UPF0102 protein Bcep1808_0248 (142 aa).

Belongs to the UPF0102 family.

The polypeptide is UPF0102 protein Bcep1808_0248 (Burkholderia vietnamiensis (strain G4 / LMG 22486) (Burkholderia cepacia (strain R1808))).